We begin with the raw amino-acid sequence, 89 residues long: Small ribosomal subunit protein uS15 (89 aa).

It belongs to the universal ribosomal protein uS15 family. As to quaternary structure, part of the 30S ribosomal subunit. Forms a bridge to the 50S subunit in the 70S ribosome, contacting the 23S rRNA.

One of the primary rRNA binding proteins, it binds directly to 16S rRNA where it helps nucleate assembly of the platform of the 30S subunit by binding and bridging several RNA helices of the 16S rRNA. Functionally, forms an intersubunit bridge (bridge B4) with the 23S rRNA of the 50S subunit in the ribosome. The chain is Small ribosomal subunit protein uS15 from Mycolicibacterium smegmatis (strain ATCC 700084 / mc(2)155) (Mycobacterium smegmatis).